The primary structure comprises 526 residues: O-phosphoserine--tRNA(Cys) ligase (526 aa).

Residues His189–Thr191, Ser234–Ser236, Tyr276–Tyr277, and Asn319 each bind substrate.

This sequence belongs to the class-II aminoacyl-tRNA synthetase family. O-phosphoseryl-tRNA(Cys) synthetase subfamily. In terms of assembly, homotetramer. Interacts with SepCysS.

The enzyme catalyses tRNA(Cys) + O-phospho-L-serine + ATP = O-phospho-L-seryl-tRNA(Cys) + AMP + diphosphate. In terms of biological role, catalyzes the attachment of O-phosphoserine (Sep) to tRNA(Cys). In Methanocorpusculum labreanum (strain ATCC 43576 / DSM 4855 / Z), this protein is O-phosphoserine--tRNA(Cys) ligase.